Reading from the N-terminus, the 278-residue chain is Probable malate dehydrogenase (278 aa).

The substrate site is built by Arg-51 and Arg-57. Residues Asn-64 and 87-89 (VSN) contribute to the NAD(+) site. Substrate-binding residues include Asn-89 and Arg-120. His-144 acts as the Proton acceptor in catalysis.

The protein belongs to the LDH/MDH superfamily.

It catalyses the reaction (S)-malate + NAD(+) = oxaloacetate + NADH + H(+). Its function is as follows. Catalyzes the reversible oxidation of malate to oxaloacetate. This is Probable malate dehydrogenase (mdh) from Pseudomonas putida (strain ATCC 47054 / DSM 6125 / CFBP 8728 / NCIMB 11950 / KT2440).